The chain runs to 277 residues: Isoprenyl transferase 1 (277 aa).

Residues 1–30 (MAVRGILGRQRREYRTPEPHPSGARPPKLG) form a disordered region. Asp42 is an active-site residue. Asp42 is a binding site for Mg(2+). Substrate-binding positions include 43-46 (GNGR), Trp47, Arg55, His59, and 87-89 (STE). The Proton acceptor role is filled by Asn90. Residues Trp91, Arg93, Arg210, and 216 to 218 (RTS) contribute to the substrate site. Residue Glu229 participates in Mg(2+) binding.

This sequence belongs to the UPP synthase family. Homodimer. Mg(2+) is required as a cofactor.

Catalyzes the condensation of isopentenyl diphosphate (IPP) with allylic pyrophosphates generating different type of terpenoids. The protein is Isoprenyl transferase 1 of Streptomyces coelicolor (strain ATCC BAA-471 / A3(2) / M145).